We begin with the raw amino-acid sequence, 454 residues long: UPF0210 protein Memar_2269 (454 aa).

The protein belongs to the UPF0210 family.

This is UPF0210 protein Memar_2269 from Methanoculleus marisnigri (strain ATCC 35101 / DSM 1498 / JR1).